A 531-amino-acid chain; its full sequence is Polyamine transporter PUT1 (531 aa).

Positions 1–76 are disordered; sequence MADTGGRPEV…LPDGDAGGPM (76 aa). Low complexity predominate over residues 17–33; it reads SPGHPAASTTAAAAADL. The span at 34–44 shows a compositional bias: basic and acidic residues; sequence GHADTGQEKPT. The next 12 membrane-spanning stretches (helical) occupy residues 83–103, 113–133, 147–167, 193–213, 224–244, 262–284, 296–316, 341–361, 391–411, 414–434, 453–473, and 476–496; these read VSMIPLIFLIFYEVSGGPFGI, LLAIIGFLVLPVIWSIPEALI, YVVWVASALGPYWGFQQGWMK, LGGGAPRAFAVVGLTAVLTLL, VAICLGVFSLLPFFVMGLIAL, WNLYLNTLFWNLNYWDSISTLAG, ALFYAVIFVVVAYLYPLLAGT, AWLMWWVQSAAALSNMGMFVA, TPLAGILFSASGVLLLSMMSF, IVAAENFLYCFGMLLEFVAFI, TAGCVAMLVPPTALIAVVLAL, and LKVAVVSLGAVAMGLVLQPAL.

This sequence belongs to the amino acid-polyamine-organocation (APC) superfamily. Polyamine:cation symporter (PHS) (TC 2.A.3.12) family. Expressed in seedling roots, leaves, stems, flowers and siliques.

The protein resides in the cell membrane. Its function is as follows. Cell membrane polyamine/proton symporter involved in the polyamine uptake in cells. Possesses high affinity for spermidine and lower affinity for spermine and putrescine. Transports paraquat, a polyamine analog, and thus confers sensitivity to this chemical which is used as a herbicide. This Oryza sativa subsp. japonica (Rice) protein is Polyamine transporter PUT1 (PUT1).